Consider the following 204-residue polypeptide: Ciliary microtubule inner protein 7 (204 aa).

The protein localises to the cell projection. Its subcellular location is the cilium. The protein is Ciliary microtubule inner protein 7 of Homo sapiens (Human).